Here is a 255-residue protein sequence, read N- to C-terminus: Thiazole synthase (255 aa).

Lysine 96 (schiff-base intermediate with DXP) is an active-site residue. Residues glycine 157, 183–184 (AG), and 205–206 (NT) contribute to the 1-deoxy-D-xylulose 5-phosphate site.

The protein belongs to the ThiG family. As to quaternary structure, homotetramer. Forms heterodimers with either ThiH or ThiS.

It localises to the cytoplasm. It catalyses the reaction [ThiS sulfur-carrier protein]-C-terminal-Gly-aminoethanethioate + 2-iminoacetate + 1-deoxy-D-xylulose 5-phosphate = [ThiS sulfur-carrier protein]-C-terminal Gly-Gly + 2-[(2R,5Z)-2-carboxy-4-methylthiazol-5(2H)-ylidene]ethyl phosphate + 2 H2O + H(+). It functions in the pathway cofactor biosynthesis; thiamine diphosphate biosynthesis. Its function is as follows. Catalyzes the rearrangement of 1-deoxy-D-xylulose 5-phosphate (DXP) to produce the thiazole phosphate moiety of thiamine. Sulfur is provided by the thiocarboxylate moiety of the carrier protein ThiS. In vitro, sulfur can be provided by H(2)S. The sequence is that of Thiazole synthase from Staphylococcus saprophyticus subsp. saprophyticus (strain ATCC 15305 / DSM 20229 / NCIMB 8711 / NCTC 7292 / S-41).